A 287-amino-acid chain; its full sequence is Nucleotide-binding protein Pmob_0154 (287 aa).

ATP is bound at residue 15-22 (GLSGAGKT). 64-67 (DIRW) contacts GTP.

It belongs to the RapZ-like family.

Its function is as follows. Displays ATPase and GTPase activities. The chain is Nucleotide-binding protein Pmob_0154 from Petrotoga mobilis (strain DSM 10674 / SJ95).